A 739-amino-acid polypeptide reads, in one-letter code: MEHTFQYAWVIPFVPLPVTMSIGLGLLLVPTATKNLRRMWAFPSVLLLSITMVFSSNLSIQQINGSFIYQYLWSWTINNDFSLEFGYLIDPLTSIMSILITTVGIVVLIYSDNYMSHDQGYLRFLSYMSFSNTSMLGLVTSSNLIQIHIFWELVGMCSYLLIGFWSTRTVAANACQKAFVTNRIGDFGLLLGILGLYWITGSFEFRDLFEIFKNLIHSNGVHFVFATLCASLLFVGAVAKSAQFPLHVWLPDAMEVPTPISALIHAATMVAAGIFLVARLLPIFTVIPYIMNLIALIGVITVLLGATLALAQRDIKRSLAYSTMSQLGYTMLALGIGSYRAALFHLITHAYSKALLFLGSGSIIHSMEPIVGYSPDKSQNMVLMGGLRKYIPITKTTFLLGTFSLCGIPPLACFWSKDEILNDSWLYSPIFAIIAYSTAGLTAFYMFRMYLLTFEGHLHIHFQNYNSIKNGSLYSISIWGKEGPKPVKINFVLSTMNNNEKVSFFSKKTYQIDGNVRNLMRSFSIHFYNKETSVYPQESDNTMLFPLLVLVLFTLFVGSIGISGVTDMDFDILSKWLTPSINLLHKNLSYSPDWYEFFINAIFSVSISYFGILIAFLLYGSVYSSFQNLDLINLFVKTGSKKILLDRIKNVIYNWSYNRGYIDVFYATALTRGIRGLAQLTHFFDRRAIDGITNGVGVASFFVGEGIKYVGGGRISSYLFLYLFYIIIIIFLLIFWSLI.

15 helical membrane passes run 9-29 (WVIP…LLLV), 40-60 (WAFP…NLSI), 89-109 (IDPL…VVLI), 144-164 (LIQI…LIGF), 184-204 (IGDF…GSFE), 219-239 (NGVH…GAVA), 258-278 (TPIS…FLVA), 280-300 (LLPI…IGVI), 327-347 (LGYT…FHLI), 354-374 (ALLF…VGYS), 396-416 (TTFL…CFWS), 425-445 (WLYS…TAFY), 542-562 (TMLF…SIGI), 597-617 (FFIN…IAFL), and 719-739 (LFLY…WSLI).

Belongs to the complex I subunit 5 family. As to quaternary structure, NDH is composed of at least 16 different subunits, 5 of which are encoded in the nucleus.

Its subcellular location is the plastid. It localises to the chloroplast thylakoid membrane. It carries out the reaction a plastoquinone + NADH + (n+1) H(+)(in) = a plastoquinol + NAD(+) + n H(+)(out). The enzyme catalyses a plastoquinone + NADPH + (n+1) H(+)(in) = a plastoquinol + NADP(+) + n H(+)(out). In terms of biological role, NDH shuttles electrons from NAD(P)H:plastoquinone, via FMN and iron-sulfur (Fe-S) centers, to quinones in the photosynthetic chain and possibly in a chloroplast respiratory chain. The immediate electron acceptor for the enzyme in this species is believed to be plastoquinone. Couples the redox reaction to proton translocation, and thus conserves the redox energy in a proton gradient. This Chloranthus spicatus (Chulantree) protein is NAD(P)H-quinone oxidoreductase subunit 5, chloroplastic (ndhF).